We begin with the raw amino-acid sequence, 180 residues long: Crossover junction endodeoxyribonuclease RuvC (180 aa).

Catalysis depends on residues Asp-7, Glu-66, and Asp-138. Residues Asp-7, Glu-66, and Asp-138 each contribute to the Mg(2+) site.

The protein belongs to the RuvC family. In terms of assembly, homodimer which binds Holliday junction (HJ) DNA. The HJ becomes 2-fold symmetrical on binding to RuvC with unstacked arms; it has a different conformation from HJ DNA in complex with RuvA. In the full resolvosome a probable DNA-RuvA(4)-RuvB(12)-RuvC(2) complex forms which resolves the HJ. The cofactor is Mg(2+).

The protein resides in the cytoplasm. It catalyses the reaction Endonucleolytic cleavage at a junction such as a reciprocal single-stranded crossover between two homologous DNA duplexes (Holliday junction).. The RuvA-RuvB-RuvC complex processes Holliday junction (HJ) DNA during genetic recombination and DNA repair. Endonuclease that resolves HJ intermediates. Cleaves cruciform DNA by making single-stranded nicks across the HJ at symmetrical positions within the homologous arms, yielding a 5'-phosphate and a 3'-hydroxyl group; requires a central core of homology in the junction. The consensus cleavage sequence is 5'-(A/T)TT(C/G)-3'. Cleavage occurs on the 3'-side of the TT dinucleotide at the point of strand exchange. HJ branch migration catalyzed by RuvA-RuvB allows RuvC to scan DNA until it finds its consensus sequence, where it cleaves and resolves the cruciform DNA. The protein is Crossover junction endodeoxyribonuclease RuvC of Paraburkholderia phytofirmans (strain DSM 17436 / LMG 22146 / PsJN) (Burkholderia phytofirmans).